Consider the following 533-residue polypeptide: uncharacterized protein (533 aa).

A signal peptide spans 1-21; sequence MVKVWKIGFGVFLPTALLFSA. C22 is lipidated: N-palmitoyl cysteine. C22 carries S-diacylglycerol cysteine lipidation. Residues 91–111 form a disordered region; that stretch reads LSKNKEGQTASQTRSSSEQTT. The segment covering 97 to 111 has biased composition (polar residues); that stretch reads GQTASQTRSSSEQTT.

This sequence belongs to the MG067/MG068/MG395 family.

The protein localises to the cell membrane. This is an uncharacterized protein from Mycoplasma pneumoniae (strain ATCC 29342 / M129 / Subtype 1) (Mycoplasmoides pneumoniae).